The sequence spans 318 residues: MGARVIDGRPIAGELKKRVASEVEGLAARGVRPGLATVLVGEDYAARAYERRVGGLAAELGCRYVCERLPREAEEADVLAVVGKLNADPRVSGILVLRPLPGHISEPAVFSALDPLKDIEAVHPVNAGLLALGRPRYVPSTPAACFYLLDRYLERSGRPPEEFYPRSTVVVVGRSNNVGKPAVSLGFARGAAVISCDANAYRAGRLREHTLKADALIVAAGVAGLIDESYVREGVIAVDVGINPVADPGGSGRTLLVGDLDFGSVARKAEALTPVPGGVGPITDVWLLKNTVAAGRGLASQAKARCLLRGSHAHSSLI.

Residues 173 to 175 (GRS) and isoleucine 242 each bind NADP(+).

Belongs to the tetrahydrofolate dehydrogenase/cyclohydrolase family. Homodimer.

It catalyses the reaction (6R)-5,10-methylene-5,6,7,8-tetrahydrofolate + NADP(+) = (6R)-5,10-methenyltetrahydrofolate + NADPH. The catalysed reaction is (6R)-5,10-methenyltetrahydrofolate + H2O = (6R)-10-formyltetrahydrofolate + H(+). The protein operates within one-carbon metabolism; tetrahydrofolate interconversion. Functionally, catalyzes the oxidation of 5,10-methylenetetrahydrofolate to 5,10-methenyltetrahydrofolate and then the hydrolysis of 5,10-methenyltetrahydrofolate to 10-formyltetrahydrofolate. In Rubrobacter xylanophilus (strain DSM 9941 / JCM 11954 / NBRC 16129 / PRD-1), this protein is Bifunctional protein FolD 3.